The sequence spans 878 residues: Probable receptor-like protein kinase At4g39110 (878 aa).

The N-terminal stretch at 1-43 (MEIRKKPNIFTVLVIDFSSKPSMALLLAILLFLSGPSASAVAA) is a signal peptide. The Extracellular segment spans residues 44–440 (AAVGPATGFK…GRTTGMGKHG (397 aa)). Asparagine 170, asparagine 183, asparagine 254, asparagine 317, and asparagine 382 each carry an N-linked (GlcNAc...) asparagine glycan. A helical membrane pass occupies residues 441-461 (MVATAGFVMMFGAFIGLGAMV). Topologically, residues 462–878 (YKWKKRPQDW…FTQFANLNGR (417 aa)) are cytoplasmic. One can recognise a Protein kinase domain in the interval 526–798 (FEASQIIGVG…GDVLWNLEYA (273 aa)). Residues 532-540 (IGVGGFGNV) and lysine 554 contribute to the ATP site. Aspartate 650 serves as the catalytic Proton acceptor. The segment at 808 to 844 (GKAEETENAKPDVVTPGSVPVSDPSPITPSVTTNEAA) is disordered.

Belongs to the protein kinase superfamily. Ser/Thr protein kinase family.

It is found in the membrane. In Arabidopsis thaliana (Mouse-ear cress), this protein is Probable receptor-like protein kinase At4g39110.